We begin with the raw amino-acid sequence, 876 residues long: Leucine--tRNA ligase (876 aa).

The short motif at 43-53 is the 'HIGH' region element; it reads PYPSGRIHMGH. Residues 632–636 carry the 'KMSKS' region motif; the sequence is KMSKS. Lys635 contacts ATP.

It belongs to the class-I aminoacyl-tRNA synthetase family.

It localises to the cytoplasm. It carries out the reaction tRNA(Leu) + L-leucine + ATP = L-leucyl-tRNA(Leu) + AMP + diphosphate. This is Leucine--tRNA ligase from Agrobacterium fabrum (strain C58 / ATCC 33970) (Agrobacterium tumefaciens (strain C58)).